The sequence spans 420 residues: 3-isopropylmalate dehydratase large subunit (420 aa).

Cys-300, Cys-361, and Cys-364 together coordinate [4Fe-4S] cluster.

The protein belongs to the aconitase/IPM isomerase family. LeuC type 2 subfamily. In terms of assembly, heterodimer of LeuC and LeuD. Requires [4Fe-4S] cluster as cofactor.

It carries out the reaction (2R,3S)-3-isopropylmalate = (2S)-2-isopropylmalate. It functions in the pathway amino-acid biosynthesis; L-leucine biosynthesis; L-leucine from 3-methyl-2-oxobutanoate: step 2/4. Functionally, catalyzes the isomerization between 2-isopropylmalate and 3-isopropylmalate, via the formation of 2-isopropylmaleate. The polypeptide is 3-isopropylmalate dehydratase large subunit (Endomicrobium trichonymphae).